A 343-amino-acid chain; its full sequence is Aspartate-semialdehyde dehydrogenase (343 aa).

Residues 13–16 (TGAV) and 41–42 (KS) contribute to the NADP(+) site. R103 serves as a coordination point for phosphate. C134 functions as the Acyl-thioester intermediate in the catalytic mechanism. Substrate is bound at residue Q161. 164–165 (SG) serves as a coordination point for NADP(+). Residue K220 participates in phosphate binding. Residue R241 participates in substrate binding. The active-site Proton acceptor is the H248. Q321 provides a ligand contact to NADP(+).

The protein belongs to the aspartate-semialdehyde dehydrogenase family. Homodimer.

The catalysed reaction is L-aspartate 4-semialdehyde + phosphate + NADP(+) = 4-phospho-L-aspartate + NADPH + H(+). It participates in amino-acid biosynthesis; L-lysine biosynthesis via DAP pathway; (S)-tetrahydrodipicolinate from L-aspartate: step 2/4. It functions in the pathway amino-acid biosynthesis; L-methionine biosynthesis via de novo pathway; L-homoserine from L-aspartate: step 2/3. Its pathway is amino-acid biosynthesis; L-threonine biosynthesis; L-threonine from L-aspartate: step 2/5. Functionally, catalyzes the NADPH-dependent formation of L-aspartate-semialdehyde (L-ASA) by the reductive dephosphorylation of L-aspartyl-4-phosphate. This Campylobacter jejuni subsp. jejuni serotype O:2 (strain ATCC 700819 / NCTC 11168) protein is Aspartate-semialdehyde dehydrogenase.